An 862-amino-acid polypeptide reads, in one-letter code: DNA mismatch repair protein MutS (862 aa).

Residue glycine 604–serine 611 participates in ATP binding.

It belongs to the DNA mismatch repair MutS family.

This protein is involved in the repair of mismatches in DNA. It is possible that it carries out the mismatch recognition step. This protein has a weak ATPase activity. This chain is DNA mismatch repair protein MutS, found in Brevibacillus brevis (strain 47 / JCM 6285 / NBRC 100599).